A 122-amino-acid polypeptide reads, in one-letter code: Large ribosomal subunit protein uL14c (122 aa).

Belongs to the universal ribosomal protein uL14 family. As to quaternary structure, part of the 50S ribosomal subunit.

The protein localises to the plastid. The protein resides in the chloroplast. Its function is as follows. Binds to 23S rRNA. This Welwitschia mirabilis (Tree tumbo) protein is Large ribosomal subunit protein uL14c.